The sequence spans 262 residues: Carboxy-S-adenosyl-L-methionine synthase (262 aa).

S-adenosyl-L-methionine is bound by residues Y50, 84–86, 137–138, N152, and R219; these read GCS and DI.

This sequence belongs to the class I-like SAM-binding methyltransferase superfamily. Cx-SAM synthase family. Homodimer.

It catalyses the reaction prephenate + S-adenosyl-L-methionine = carboxy-S-adenosyl-L-methionine + 3-phenylpyruvate + H2O. Its function is as follows. Catalyzes the conversion of S-adenosyl-L-methionine (SAM) to carboxy-S-adenosyl-L-methionine (Cx-SAM). The polypeptide is Carboxy-S-adenosyl-L-methionine synthase (Psychrobacter arcticus (strain DSM 17307 / VKM B-2377 / 273-4)).